We begin with the raw amino-acid sequence, 317 residues long: Transaldolase (317 aa).

Residue Lys132 is the Schiff-base intermediate with substrate of the active site.

It belongs to the transaldolase family. Type 1 subfamily. Homodimer.

It localises to the cytoplasm. It catalyses the reaction D-sedoheptulose 7-phosphate + D-glyceraldehyde 3-phosphate = D-erythrose 4-phosphate + beta-D-fructose 6-phosphate. The protein operates within carbohydrate degradation; pentose phosphate pathway; D-glyceraldehyde 3-phosphate and beta-D-fructose 6-phosphate from D-ribose 5-phosphate and D-xylulose 5-phosphate (non-oxidative stage): step 2/3. Its function is as follows. Transaldolase is important for the balance of metabolites in the pentose-phosphate pathway. The chain is Transaldolase from Actinobacillus succinogenes (strain ATCC 55618 / DSM 22257 / CCUG 43843 / 130Z).